The following is a 647-amino-acid chain: DNA mismatch repair protein MutL (647 aa).

Belongs to the DNA mismatch repair MutL/HexB family.

In terms of biological role, this protein is involved in the repair of mismatches in DNA. It is required for dam-dependent methyl-directed DNA mismatch repair. May act as a 'molecular matchmaker', a protein that promotes the formation of a stable complex between two or more DNA-binding proteins in an ATP-dependent manner without itself being part of a final effector complex. In Koribacter versatilis (strain Ellin345), this protein is DNA mismatch repair protein MutL.